Here is a 445-residue protein sequence, read N- to C-terminus: Ribosomal protein uS12 methylthiotransferase RimO (445 aa).

An MTTase N-terminal domain is found at 4–119 (LKFGLVSLGC…LDDAIEDFFN (116 aa)). [4Fe-4S] cluster-binding residues include cysteine 13, cysteine 48, cysteine 82, cysteine 156, cysteine 160, and cysteine 163. The Radical SAM core domain occupies 142–372 (TTGEYSSYVR…MLIQQQVSKN (231 aa)). The region spanning 375–441 (AKKIGKVYKV…EYDLIGVVYN (67 aa)) is the TRAM domain.

The protein belongs to the methylthiotransferase family. RimO subfamily. The cofactor is [4Fe-4S] cluster.

Its subcellular location is the cytoplasm. The catalysed reaction is L-aspartate(89)-[ribosomal protein uS12]-hydrogen + (sulfur carrier)-SH + AH2 + 2 S-adenosyl-L-methionine = 3-methylsulfanyl-L-aspartate(89)-[ribosomal protein uS12]-hydrogen + (sulfur carrier)-H + 5'-deoxyadenosine + L-methionine + A + S-adenosyl-L-homocysteine + 2 H(+). Functionally, catalyzes the methylthiolation of an aspartic acid residue of ribosomal protein uS12. The protein is Ribosomal protein uS12 methylthiotransferase RimO of Clostridium acetobutylicum (strain ATCC 824 / DSM 792 / JCM 1419 / IAM 19013 / LMG 5710 / NBRC 13948 / NRRL B-527 / VKM B-1787 / 2291 / W).